We begin with the raw amino-acid sequence, 171 residues long: UPF0316 protein EAT1b_0871 (171 aa).

3 helical membrane passes run 4 to 24 (ILLI…RTIM), 32 to 52 (IAGL…GIVF), and 57 to 77 (TVGM…GGFV).

Belongs to the UPF0316 family.

It localises to the cell membrane. This chain is UPF0316 protein EAT1b_0871, found in Exiguobacterium sp. (strain ATCC BAA-1283 / AT1b).